Consider the following 187-residue polypeptide: Peptidyl-tRNA hydrolase (187 aa).

Y14 provides a ligand contact to tRNA. The active-site Proton acceptor is H19. The tRNA site is built by Y64, N66, and N112.

Belongs to the PTH family. As to quaternary structure, monomer.

The protein resides in the cytoplasm. The catalysed reaction is an N-acyl-L-alpha-aminoacyl-tRNA + H2O = an N-acyl-L-amino acid + a tRNA + H(+). In terms of biological role, hydrolyzes ribosome-free peptidyl-tRNAs (with 1 or more amino acids incorporated), which drop off the ribosome during protein synthesis, or as a result of ribosome stalling. Its function is as follows. Catalyzes the release of premature peptidyl moieties from peptidyl-tRNA molecules trapped in stalled 50S ribosomal subunits, and thus maintains levels of free tRNAs and 50S ribosomes. In Clostridium acetobutylicum (strain ATCC 824 / DSM 792 / JCM 1419 / IAM 19013 / LMG 5710 / NBRC 13948 / NRRL B-527 / VKM B-1787 / 2291 / W), this protein is Peptidyl-tRNA hydrolase.